The primary structure comprises 334 residues: Probable tRNA pseudouridine synthase B (334 aa).

Residue D82 is the Nucleophile of the active site. Positions 250–325 constitute a PUA domain; sequence LPKIWIKDSA…IAVDVEKVFM (76 aa).

This sequence belongs to the pseudouridine synthase TruB family. Type 2 subfamily.

The enzyme catalyses uridine(55) in tRNA = pseudouridine(55) in tRNA. In terms of biological role, could be responsible for synthesis of pseudouridine from uracil-55 in the psi GC loop of transfer RNAs. The protein is Probable tRNA pseudouridine synthase B of Pyrococcus abyssi (strain GE5 / Orsay).